Reading from the N-terminus, the 495-residue chain is Trigger factor (495 aa).

In terms of domain architecture, PPIase FKBP-type spans 169 to 254; it reads GDRVAMDYVG…VKDVAAPGAV (86 aa). The interval 441-495 is disordered; sequence LAEDEGEAKAETKKAAPKKKAAAKTEAAEAGEGEEAAAPKKKAAPKKKAADESAE.

Belongs to the FKBP-type PPIase family. Tig subfamily.

Its subcellular location is the cytoplasm. It carries out the reaction [protein]-peptidylproline (omega=180) = [protein]-peptidylproline (omega=0). Functionally, involved in protein export. Acts as a chaperone by maintaining the newly synthesized protein in an open conformation. Functions as a peptidyl-prolyl cis-trans isomerase. The sequence is that of Trigger factor from Rhizobium etli (strain CIAT 652).